Here is a 307-residue protein sequence, read N- to C-terminus: NAD kinase 1 (307 aa).

Catalysis depends on Asp-67, which acts as the Proton acceptor. NAD(+) contacts are provided by residues Asp-67–Gly-68, Asn-149–Glu-150, Arg-160, Asp-181, and Thr-192–Ser-197.

The protein belongs to the NAD kinase family. A divalent metal cation is required as a cofactor.

The protein localises to the cytoplasm. It carries out the reaction NAD(+) + ATP = ADP + NADP(+) + H(+). In terms of biological role, involved in the regulation of the intracellular balance of NAD and NADP, and is a key enzyme in the biosynthesis of NADP. Catalyzes specifically the phosphorylation on 2'-hydroxyl of the adenosine moiety of NAD to yield NADP. Essential for photoheterotrophic growth. Has a significant function in the oxidative pentose phosphate (OPP) pathway for glucose catabolism under photoheterotrophic conditions. Is also involved in cellular redox homeostasis. The chain is NAD kinase 1 from Synechocystis sp. (strain ATCC 27184 / PCC 6803 / Kazusa).